We begin with the raw amino-acid sequence, 325 residues long: Formimidoylglutamase (325 aa).

The Mn(2+) site is built by histidine 130, aspartate 156, histidine 158, aspartate 160, cysteine 244, and aspartate 246.

It belongs to the arginase family. It depends on Mn(2+) as a cofactor.

It catalyses the reaction N-formimidoyl-L-glutamate + H2O = formamide + L-glutamate. The protein operates within amino-acid degradation; L-histidine degradation into L-glutamate; L-glutamate from N-formimidoyl-L-glutamate (hydrolase route): step 1/1. Its function is as follows. Catalyzes the conversion of N-formimidoyl-L-glutamate to L-glutamate and formamide. This is Formimidoylglutamase from Geobacillus sp. (strain WCH70).